The sequence spans 782 residues: General transcription and DNA repair factor IIH helicase/translocase subunit XPB (782 aa).

Over residues 1 to 11 (MGKRDRVDRDK) the composition is skewed to basic and acidic residues. The segment at 1–52 (MGKRDRVDRDKKKSKKRQYEEEEEDEDDAPGNESQEAVPSAAGKQVDESSTK) is disordered. The Nuclear localization signal signature appears at 6–18 (RVDRDKKKSKKRQ). Over residues 20 to 30 (EEEEEDEDDAP) the composition is skewed to acidic residues. At serine 34 the chain carries Phosphoserine. Residues 328–489 (FGNGRARSGV…LNFLIGPKLY (162 aa)) form the Helicase ATP-binding domain. 341 to 348 (PCGAGKSL) lines the ATP pocket. A DEVH box motif is present at residues 442–445 (EVHT). Residues 543–703 (ACQFLIKFHE…AGMEEEELAF (161 aa)) form the Helicase C-terminal domain. Serine 686 is subject to Phosphoserine. A Phosphoserine; by CK2 modification is found at serine 751.

Belongs to the helicase family. RAD25/XPB subfamily. In terms of assembly, component of the 7-subunit TFIIH core complex composed of XPB/ERCC3, XPD/ERCC2, GTF2H1, GTF2H2, GTF2H3, GTF2H4 and GTF2H5, which is active in NER. The core complex associates with the 3-subunit CDK-activating kinase (CAK) module composed of CCNH/cyclin H, CDK7 and MNAT1 to form the 10-subunit holoenzyme (holo-TFIIH) active in transcription. Interacts with PUF60. Interacts with ATF7IP. Interacts with KAT2A; leading to KAT2A recruitment to promoters and acetylation of histones. Part of TBP-based Pol II pre-initiation complex (PIC), in which Pol II core assembles with general transcription factors and other specific initiation factors including GTF2E1, GTF2E2, GTF2F1, GTF2F2, TCEA1, ERCC2, ERCC3, GTF2H2, GTF2H3, GTF2H4, GTF2H5, GTF2A1, GTF2A2, GTF2B and TBP; this large multi-subunit PIC complex mediates DNA unwinding and targets Pol II core to the transcription start site where the first phosphodiester bond forms. Post-translationally, phosphorylation on Ser-751 by CK2 controls the 5'-excision activity of ERCC1-XPF endonuclease; phosphorylated protein inhibits the excision activity and thus NER. Dephosphorylation reactivates the 5'-excision step. Phosphorylation has no effect on transcription or the 3'-5' helicase activity.

It is found in the nucleus. It carries out the reaction Couples ATP hydrolysis with the unwinding of duplex DNA by translocating in the 3'-5' direction.. The enzyme catalyses ATP + H2O = ADP + phosphate + H(+). Phosphorylation on Ser-751 by CK2 controls the 5'-excision activity of ERCC1-XPF endonuclease; phosphorylated protein inhibits the excision activity and thus NER. ATPase activity is stimulated by TFIIH subunit p52 (GTF2H4). DNA translocase activity by this subunit in TFIIH is stimulated by XPA, ERCC5/XPG and XFP plus ERCC1. ATP-dependent 3'-5' DNA helicase/translocase; binds dsDNA rather than ssDNA, unzipping it in a translocase rather than classical helicase activity. Component of the general transcription and DNA repair factor IIH (TFIIH) core complex. When complexed to CDK-activating kinase (CAK), involved in RNA transcription by RNA polymerase II. The ATPase activity of XPB/ERCC3, but not its helicase activity, is required for DNA opening; it may wrap around the damaged DNA wedging it open, causing localized melting and twisting that allows XPD/ERCC2 helicase to anchor. The ATP-dependent helicase activity of XPB/ERCC3 may be required for promoter escape. Also involved in transcription-coupled nucleotide excision repair (NER) of damaged DNA. In NER, TFIIH acts by opening DNA around the lesion to allow the excision of the damaged oligonucleotide and its replacement by a new DNA fragment. The structure of the TFIIH transcription complex differs from the NER-TFIIH complex; large movements by XPD/ERCC2 and XPB/ERCC3 are stabilized by XPA. The chain is General transcription and DNA repair factor IIH helicase/translocase subunit XPB (Ercc3) from Rattus norvegicus (Rat).